A 376-amino-acid polypeptide reads, in one-letter code: S-adenosylmethionine synthase (376 aa).

Position 15 (His15) interacts with ATP. Asp17 is a Mg(2+) binding site. Glu43 lines the K(+) pocket. L-methionine is bound by residues Glu56 and Gln92. The segment at 92–102 (QSKEIANQVDR) is flexible loop. Residues 156 to 158 (DMK), Asp231, 237 to 238 (RK), Ala254, and Lys258 contribute to the ATP site. Asp231 is a binding site for L-methionine. Lys262 contacts L-methionine.

This sequence belongs to the AdoMet synthase family. In terms of assembly, homotetramer; dimer of dimers. The cofactor is Mg(2+). K(+) serves as cofactor.

The protein resides in the cytoplasm. The catalysed reaction is L-methionine + ATP + H2O = S-adenosyl-L-methionine + phosphate + diphosphate. It participates in amino-acid biosynthesis; S-adenosyl-L-methionine biosynthesis; S-adenosyl-L-methionine from L-methionine: step 1/1. In terms of biological role, catalyzes the formation of S-adenosylmethionine (AdoMet) from methionine and ATP. The overall synthetic reaction is composed of two sequential steps, AdoMet formation and the subsequent tripolyphosphate hydrolysis which occurs prior to release of AdoMet from the enzyme. The chain is S-adenosylmethionine synthase from Mycoplasmopsis pulmonis (strain UAB CTIP) (Mycoplasma pulmonis).